We begin with the raw amino-acid sequence, 293 residues long: Cell division protein FtsQ (293 aa).

Over 1–29 (MSQVRSKSQQGKRQAKPQEVVPATILTEQ) the chain is Cytoplasmic. The chain crosses the membrane as a helical span at residues 30–52 (LSTYAFGTVTAGAVMVAVAAWMG). Topologically, residues 53–293 (GSLASIDERI…SQIDDKSGGA (241 aa)) are periplasmic. The POTRA domain maps to 75–144 (FTVTKISIEG…NDIWILAENR (70 aa)).

This sequence belongs to the FtsQ/DivIB family. FtsQ subfamily.

It is found in the cell inner membrane. In terms of biological role, essential cell division protein. The polypeptide is Cell division protein FtsQ (Hirschia baltica (strain ATCC 49814 / DSM 5838 / IFAM 1418)).